Consider the following 210-residue polypeptide: Protein GrpE (210 aa).

A disordered region spans residues 1–71; sequence MSEKDQSVNN…DTKIKELEKL (71 aa). Residues 11–23 are compositionally biased toward acidic residues; sequence TEEDFNVETEDNQ. The span at 24–35 shows a compositional bias: polar residues; sequence NDTNIENSVSNT. Low complexity predominate over residues 36 to 46; the sequence is DNSEANASDSE. The span at 47–60 shows a compositional bias: acidic residues; it reads NNSEESIKDEESES. Residues 61–71 show a composition bias toward basic and acidic residues; sequence QDTKIKELEKL.

This sequence belongs to the GrpE family. As to quaternary structure, homodimer.

The protein resides in the cytoplasm. In terms of biological role, participates actively in the response to hyperosmotic and heat shock by preventing the aggregation of stress-denatured proteins, in association with DnaK and GrpE. It is the nucleotide exchange factor for DnaK and may function as a thermosensor. Unfolded proteins bind initially to DnaJ; upon interaction with the DnaJ-bound protein, DnaK hydrolyzes its bound ATP, resulting in the formation of a stable complex. GrpE releases ADP from DnaK; ATP binding to DnaK triggers the release of the substrate protein, thus completing the reaction cycle. Several rounds of ATP-dependent interactions between DnaJ, DnaK and GrpE are required for fully efficient folding. This Staphylococcus epidermidis (strain ATCC 35984 / DSM 28319 / BCRC 17069 / CCUG 31568 / BM 3577 / RP62A) protein is Protein GrpE.